The primary structure comprises 352 residues: S-norcoclaurine synthase 1 (352 aa).

The Fe2OG dioxygenase domain maps to 200 to 304 (KPLRTVFNRE…RLSIAAFHDP (105 aa)). Residues His228, Asp230, and His285 each contribute to the Fe cation site.

Belongs to the iron/ascorbate-dependent oxidoreductase family. In terms of assembly, monomer. Requires Fe cation as cofactor.

The enzyme catalyses (4-hydroxyphenyl)acetaldehyde + dopamine = (S)-norcoclaurine + H2O. Inhibited by O-phenanthroline, but not by EDTA. Functionally, involved in the biosynthesis of the common precursor of all benzylisoquinoline alkaloids such as morphine, sanguinarine, codeine or berberine. Condenses dopamine and phenylacetaldehyde, 3,4-dihydrophenylacetaldehyde or 4-hydroxyphenylacetaldehyde. This is S-norcoclaurine synthase 1 (NCS1) from Coptis japonica (Japanese goldthread).